A 639-amino-acid chain; its full sequence is Chaperone protein HtpG (639 aa).

The segment at 1-347 is a; substrate-binding; the sequence is MSHQETHGFQ…SNDLPLNVSR (347 aa). The tract at residues 348 to 564 is b; sequence EILQDNKITT…AGEMSSQMIK (217 aa). Positions 565-639 are c; sequence LMQAAGQAVT…MNKMLLASVK (75 aa).

It belongs to the heat shock protein 90 family. As to quaternary structure, homodimer.

Its subcellular location is the cytoplasm. Functionally, molecular chaperone. Has ATPase activity. The sequence is that of Chaperone protein HtpG from Shewanella loihica (strain ATCC BAA-1088 / PV-4).